A 236-amino-acid chain; its full sequence is Rho-related GTP-binding protein RhoV (236 aa).

The disordered stretch occupies residues 1–27 (MPPRELSEAEPPPLPASTPPPRRRSAP). The segment covering 10 to 20 (EPPPLPASTPP) has biased composition (pro residues). Ser-25 carries the phosphoserine modification. GTP-binding positions include 38–45 (GDGAVGKS), 85–89 (DTAGQ), and 143–146 (TQAD). A lipid anchor (S-palmitoyl cysteine) is attached at Cys-234.

Belongs to the small GTPase superfamily. Rho family. Interacts with PAK2. Mg(2+) serves as cofactor.

It is found in the cell membrane. The protein resides in the endosome membrane. In terms of biological role, plays a role in the control of the actin cytoskeleton via activation of the JNK pathway. The chain is Rho-related GTP-binding protein RhoV from Mus musculus (Mouse).